We begin with the raw amino-acid sequence, 263 residues long: Endonuclease 8 (263 aa).

The active-site Schiff-base intermediate with DNA is the P2. E3 functions as the Proton donor in the catalytic mechanism. K53 acts as the Proton donor; for beta-elimination activity in catalysis. Residues Q70, R125, and N169 each coordinate DNA. Residues 229–263 (KVFHRDGEACERCGGIIEKTTLSSRPFYWCPHCQK) form an FPG-type zinc finger. R253 acts as the Proton donor; for delta-elimination activity in catalysis.

The protein belongs to the FPG family. Zn(2+) serves as cofactor.

The enzyme catalyses 2'-deoxyribonucleotide-(2'-deoxyribose 5'-phosphate)-2'-deoxyribonucleotide-DNA = a 3'-end 2'-deoxyribonucleotide-(2,3-dehydro-2,3-deoxyribose 5'-phosphate)-DNA + a 5'-end 5'-phospho-2'-deoxyribonucleoside-DNA + H(+). Functionally, involved in base excision repair of DNA damaged by oxidation or by mutagenic agents. Acts as a DNA glycosylase that recognizes and removes damaged bases. Has a preference for oxidized pyrimidines, such as thymine glycol, 5,6-dihydrouracil and 5,6-dihydrothymine. Has AP (apurinic/apyrimidinic) lyase activity and introduces nicks in the DNA strand. Cleaves the DNA backbone by beta-delta elimination to generate a single-strand break at the site of the removed base with both 3'- and 5'-phosphates. This is Endonuclease 8 from Salmonella heidelberg (strain SL476).